A 320-amino-acid polypeptide reads, in one-letter code: Phosphate acyltransferase (320 aa).

The protein belongs to the PlsX family. In terms of assembly, homodimer. Probably interacts with PlsY.

It is found in the cytoplasm. It carries out the reaction a fatty acyl-[ACP] + phosphate = an acyl phosphate + holo-[ACP]. It participates in lipid metabolism; phospholipid metabolism. Functionally, catalyzes the reversible formation of acyl-phosphate (acyl-PO(4)) from acyl-[acyl-carrier-protein] (acyl-ACP). This enzyme utilizes acyl-ACP as fatty acyl donor, but not acyl-CoA. This is Phosphate acyltransferase from Syntrophomonas wolfei subsp. wolfei (strain DSM 2245B / Goettingen).